Here is a 459-residue protein sequence, read N- to C-terminus: MDQSKRYVNLALSEADLIKGGRHVLCAYRMRPRPGHGYVETAAHFAAESSTGTNVEVCTTDDFTRGVDALVYEVDEAEGLMKIAYPVDLFDRNIIDGKAMIASFLTLTVGNNQGMSDVENAKMEDFYVPPEFLKLFDGPACNISHMWKVLGRPEVNGGMVVGTIIKPKLGLRPKPFADACHQFWLGGDFIKNDEPQGNQVFAPLKETMRLVADAMRRAQDETGVPKLLSANITADDPAEMIARGNFILETFGENASHVAFLVDGFVAGPTAVTTCRRNFPDTFLHYHRAGHGAITSRQSKRGYTVLVHMKMARLLGASGIHTGTMGYGKMEGAPDEKMVAYMLERQIAEGPYYRQDWGGMASCTPIISGGMSALRLPGFFDNLGHSNVIQTSGGGAFGHKDGAIAGALSLRQAHEAWLKKIDLVDYAQTHAELRGAFESFASDADRLYPGWRDRLRIAA.

Asparagine 111 serves as a coordination point for substrate. Catalysis depends on lysine 166, which acts as the Proton acceptor. Position 168 (lysine 168) interacts with substrate. 3 residues coordinate Mg(2+): lysine 191, aspartate 193, and glutamate 194. An N6-carboxylysine modification is found at lysine 191. The Proton acceptor role is filled by histidine 287. Arginine 288, histidine 321, and serine 368 together coordinate substrate.

It belongs to the RuBisCO large chain family. Type II subfamily. Homodimer. Mg(2+) serves as cofactor.

The enzyme catalyses 2 (2R)-3-phosphoglycerate + 2 H(+) = D-ribulose 1,5-bisphosphate + CO2 + H2O. The catalysed reaction is D-ribulose 1,5-bisphosphate + O2 = 2-phosphoglycolate + (2R)-3-phosphoglycerate + 2 H(+). Functionally, ruBisCO catalyzes two reactions: the carboxylation of D-ribulose 1,5-bisphosphate, the primary event in carbon dioxide fixation, as well as the oxidative fragmentation of the pentose substrate. Both reactions occur simultaneously and in competition at the same active site. This Paramagnetospirillum magnetotacticum (Aquaspirillum magnetotacticum) protein is Ribulose bisphosphate carboxylase.